The chain runs to 251 residues: Malonyl-[acyl-carrier protein] O-methyltransferase (251 aa).

It belongs to the methyltransferase superfamily.

It carries out the reaction malonyl-[ACP] + S-adenosyl-L-methionine = malonyl-[ACP] methyl ester + S-adenosyl-L-homocysteine. It participates in cofactor biosynthesis; biotin biosynthesis. Converts the free carboxyl group of a malonyl-thioester to its methyl ester by transfer of a methyl group from S-adenosyl-L-methionine (SAM). It allows to synthesize pimeloyl-ACP via the fatty acid synthetic pathway. This is Malonyl-[acyl-carrier protein] O-methyltransferase from Erwinia billingiae (strain Eb661).